Consider the following 146-residue polypeptide: MKLHELKPAEGSRKVRNRVGRGIGSGNGKTAGKGHKGQNARSGGGVRLGFEGGQTPLFRRLPKRGFTNINRKEFAIVNLSTLNRFEDGTEVTPELLLETGVISKLNDGVKILASGAVEKKLTVKAHKFSSSAKEAIEAAGGSVEVI.

A compositionally biased stretch (basic and acidic residues) spans 1 to 13 (MKLHELKPAEGSR). Residues 1 to 52 (MKLHELKPAEGSRKVRNRVGRGIGSGNGKTAGKGHKGQNARSGGGVRLGFEG) form a disordered region. Gly residues-rich tracts occupy residues 21 to 31 (RGIGSGNGKTA) and 42 to 52 (SGGGVRLGFEG).

It belongs to the universal ribosomal protein uL15 family. In terms of assembly, part of the 50S ribosomal subunit.

Binds to the 23S rRNA. This chain is Large ribosomal subunit protein uL15, found in Bacillus anthracis (strain A0248).